The primary structure comprises 313 residues: GTPase Era (313 aa).

The region spanning 13–186 (RSGFVSFVGR…ADLLVGLLPE (174 aa)) is the Era-type G domain. The G1 stretch occupies residues 21–28 (GRPNAGKS). 21 to 28 (GRPNAGKS) provides a ligand contact to GTP. Residues 47–51 (QTTRT) form a G2 region. The segment at 68 to 71 (DTPG) is G3. GTP is bound by residues 68–72 (DTPGL) and 131–134 (TKTD). The tract at residues 131-134 (TKTD) is G4. The tract at residues 165–167 (VSA) is G5. Residues 217-299 (LRDELPHSVA…YLDLHVKIAK (83 aa)) enclose the KH type-2 domain.

This sequence belongs to the TRAFAC class TrmE-Era-EngA-EngB-Septin-like GTPase superfamily. Era GTPase family. In terms of assembly, monomer.

It localises to the cytoplasm. Its subcellular location is the cell membrane. In terms of biological role, an essential GTPase that binds both GDP and GTP, with rapid nucleotide exchange. Plays a role in 16S rRNA processing and 30S ribosomal subunit biogenesis and possibly also in cell cycle regulation and energy metabolism. In Nocardioides sp. (strain ATCC BAA-499 / JS614), this protein is GTPase Era.